The primary structure comprises 503 residues: Putative (R)-citramalate synthase CimA (503 aa).

The region spanning 9-257 is the Pyruvate carboxyltransferase domain; sequence IRFFDTTLRD…DTGIATEELY (249 aa).

This sequence belongs to the alpha-IPM synthase/homocitrate synthase family. As to quaternary structure, homodimer.

The catalysed reaction is pyruvate + acetyl-CoA + H2O = (3R)-citramalate + CoA + H(+). The protein operates within amino-acid biosynthesis; L-isoleucine biosynthesis; 2-oxobutanoate from pyruvate: step 1/3. Catalyzes the condensation of pyruvate and acetyl-coenzyme A to form (R)-citramalate. The polypeptide is Putative (R)-citramalate synthase CimA (Methanoculleus marisnigri (strain ATCC 35101 / DSM 1498 / JR1)).